The sequence spans 334 residues: Galactinol synthase 4 (334 aa).

K104 is an active-site residue. Mn(2+) is bound by residues D120, D122, and H258.

It belongs to the glycosyltransferase 8 family. Galactosyltransferase subfamily. A divalent metal cation is required as a cofactor.

The protein resides in the cytoplasm. It carries out the reaction myo-inositol + UDP-alpha-D-galactose = alpha-D-galactosyl-(1-&gt;3)-1D-myo-inositol + UDP + H(+). Galactinol synthase involved in the biosynthesis of raffinose family oligosaccharides (RFOs) that function as osmoprotectants. May promote plant stress tolerance. This Arabidopsis thaliana (Mouse-ear cress) protein is Galactinol synthase 4 (GOLS4).